The following is a 1677-amino-acid chain: Zinc finger protein 831 (1677 aa).

Residues 1–26 (MEVPEPTCPAPPARDQPAPTPGPPGA) are compositionally biased toward pro residues. Positions 1 to 43 (MEVPEPTCPAPPARDQPAPTPGPPGAPGGQASPHLTLGPVLLP) are disordered. 2 C2H2-type zinc fingers span residues 144–166 (YLCP…IRSH) and 172–196 (FPCA…TQTH). 10 disordered regions span residues 193-250 (TQTH…SPGA), 270-398 (GSAF…AGLE), 516-557 (WLEP…PSGH), 663-931 (EAAG…VLSA), 950-1062 (TPLP…TCEA), 1100-1119 (NWEL…SGPL), 1137-1176 (LTRP…PFPS), 1216-1243 (LRDE…GPAQ), 1510-1597 (SAES…GQYG), and 1620-1677 (LITR…VIEI). Basic and acidic residues-rich tracts occupy residues 216-232 (EGDK…RGES) and 325-341 (KPWD…KCES). Residues 376–385 (EGGPGPGPGV) show a composition bias toward gly residues. Residues 391 to 423 (GAREAGLELEKKRLEERIAQLISHNQAVVDDAQ) are a coiled coil. Basic and acidic residues-rich tracts occupy residues 517 to 526 (LEPREPRDPW), 674 to 684 (QDRRTPVHEDI), 707 to 727 (PTKH…RVEE), and 813 to 834 (SGED…HSWK). 2 stretches are compositionally biased toward low complexity: residues 880–894 (LESS…SVAL) and 905–919 (PLHP…HPSL). Residues 1153–1170 (SSHSGTSRSHSTRSPHST) show a composition bias toward low complexity. Over residues 1518–1531 (QTAGRTLTSSSPDS) the composition is skewed to polar residues. A compositionally biased stretch (basic and acidic residues) spans 1649 to 1662 (RSLEGMRKQTRVEF).

The polypeptide is Zinc finger protein 831 (ZNF831) (Homo sapiens (Human)).